We begin with the raw amino-acid sequence, 482 residues long: Succinate-semialdehyde dehydrogenase [NADP(+)] GabD (482 aa).

Residues 156 to 157 (WN), 180 to 183 (KPAS), and 233 to 234 (GS) contribute to the NADP(+) site. E255 functions as the Proton acceptor in the catalytic mechanism. Residue L256 participates in NADP(+) binding. The active-site Nucleophile is the C289. NADP(+) is bound at residue E386.

It belongs to the aldehyde dehydrogenase family. Homotetramer.

It carries out the reaction succinate semialdehyde + NADP(+) + H2O = succinate + NADPH + 2 H(+). It catalyses the reaction 5-oxopentanoate + NADP(+) + H2O = glutarate + NADPH + 2 H(+). It participates in amino-acid degradation; 4-aminobutanoate degradation. Its pathway is amino-acid degradation. Catalyzes the NADP(+)-dependent oxidation of succinate semialdehyde to succinate. Thereby functions in a GABA degradation pathway that allows some E.coli strains to utilize GABA as a nitrogen source for growth. Also catalyzes the conversion of glutarate semialdehyde to glutarate, as part of a L-lysine degradation pathway that proceeds via cadaverine, glutarate and L-2-hydroxyglutarate. This Escherichia coli (strain K12) protein is Succinate-semialdehyde dehydrogenase [NADP(+)] GabD (gabD).